The chain runs to 258 residues: Tryptophan synthase alpha chain (258 aa).

Catalysis depends on proton acceptor residues glutamate 52 and aspartate 63.

Belongs to the TrpA family. Tetramer of two alpha and two beta chains.

The enzyme catalyses (1S,2R)-1-C-(indol-3-yl)glycerol 3-phosphate + L-serine = D-glyceraldehyde 3-phosphate + L-tryptophan + H2O. Its pathway is amino-acid biosynthesis; L-tryptophan biosynthesis; L-tryptophan from chorismate: step 5/5. Its function is as follows. The alpha subunit is responsible for the aldol cleavage of indoleglycerol phosphate to indole and glyceraldehyde 3-phosphate. The sequence is that of Tryptophan synthase alpha chain from Streptococcus pneumoniae (strain ATCC 700669 / Spain 23F-1).